Here is a 231-residue protein sequence, read N- to C-terminus: Lipoprotein-releasing system ATP-binding protein LolD (231 aa).

Residues 6–231 (LQVQAVSKSY…YLQAVAEHAQ (226 aa)) enclose the ABC transporter domain. 42 to 49 (GTSGSGKS) serves as a coordination point for ATP.

Belongs to the ABC transporter superfamily. Lipoprotein translocase (TC 3.A.1.125) family. As to quaternary structure, the complex is composed of two ATP-binding proteins (LolD) and two transmembrane proteins (LolC and LolE).

The protein resides in the cell inner membrane. Part of the ABC transporter complex LolCDE involved in the translocation of mature outer membrane-directed lipoproteins, from the inner membrane to the periplasmic chaperone, LolA. Responsible for the formation of the LolA-lipoprotein complex in an ATP-dependent manner. This Shewanella sp. (strain MR-4) protein is Lipoprotein-releasing system ATP-binding protein LolD.